The primary structure comprises 136 residues: Class I hydrophobin A (136 aa).

The signal sequence occupies residues 1–16 (MRFALAITTLIAAVTA). Disulfide bonds link C39–C109, C47–C103, C48–C85, and C110–C128.

Belongs to the fungal hydrophobin family. As to expression, expressed in aerial conidia, in vitro blastospores, submerged conidia, and cells sporulating on chitin and insect cuticle, with hyd1 expression peaking in growing mycelia.

The protein resides in the secreted. It localises to the cell wall. The protein localises to the spore coat. It is found in the vacuole. Its subcellular location is the cytoplasmic vesicle. In terms of biological role, aerial growth, conidiation, and dispersal of filamentous fungi in the environment rely upon a capability of their secreting small amphipathic proteins called hydrophobins (HPBs) with low sequence identity. Class I can self-assemble into an outermost layer of rodlet bundles on aerial cell surfaces, conferring cellular hydrophobicity that supports fungal growth, development and dispersal; whereas Class II form highly ordered films at water-air interfaces through intermolecular interactions but contribute nothing to the rodlet structure. Hyd1A contributes to certain cell wall-related features, such as hydrophobicity but is not involved in cell wall-related events during fungal proliferation in host hemocoel. Hyd1A and hyd1B coregulate the formation, morphology and orderly assembly of rodlet bundles required for conidial hydrophobicity and infectivity. Contributes to the spore coat rodlet layer. This chain is Class I hydrophobin A, found in Beauveria bassiana (strain ARSEF 2860) (White muscardine disease fungus).